A 345-amino-acid polypeptide reads, in one-letter code: Phosphoribosylformylglycinamidine cyclo-ligase (345 aa).

It belongs to the AIR synthase family.

It is found in the cytoplasm. It carries out the reaction 2-formamido-N(1)-(5-O-phospho-beta-D-ribosyl)acetamidine + ATP = 5-amino-1-(5-phospho-beta-D-ribosyl)imidazole + ADP + phosphate + H(+). Its pathway is purine metabolism; IMP biosynthesis via de novo pathway; 5-amino-1-(5-phospho-D-ribosyl)imidazole from N(2)-formyl-N(1)-(5-phospho-D-ribosyl)glycinamide: step 2/2. This Shewanella sp. (strain ANA-3) protein is Phosphoribosylformylglycinamidine cyclo-ligase.